A 476-amino-acid chain; its full sequence is Probable rhodanese domain-containing dual specificity protein phosphatase (476 aa).

In terms of domain architecture, Rhodanese spans Ile-32–Asn-190. One can recognise a Tyrosine-protein phosphatase domain in the interval Tyr-208–Leu-350. The active-site Phosphocysteine intermediate is the Cys-294. Residues Lys-425–Lys-436 are compositionally biased toward low complexity. The interval Lys-425 to Leu-476 is disordered. Basic and acidic residues predominate over residues Lys-442–Thr-461.

This sequence belongs to the protein-tyrosine phosphatase family. Non-receptor class dual specificity subfamily.

It catalyses the reaction O-phospho-L-tyrosyl-[protein] + H2O = L-tyrosyl-[protein] + phosphate. The catalysed reaction is O-phospho-L-seryl-[protein] + H2O = L-seryl-[protein] + phosphate. It carries out the reaction O-phospho-L-threonyl-[protein] + H2O = L-threonyl-[protein] + phosphate. In terms of biological role, has a dual specificity toward Ser/Thr and Tyr-containing proteins. This is Probable rhodanese domain-containing dual specificity protein phosphatase from Dictyostelium discoideum (Social amoeba).